A 55-amino-acid polypeptide reads, in one-letter code: ATP synthase F(0) complex subunit 8 (55 aa).

A helical membrane pass occupies residues Trp-9–Leu-29.

It belongs to the ATPase protein 8 family. Component of the ATP synthase complex composed at least of ATP5F1A/subunit alpha, ATP5F1B/subunit beta, ATP5MC1/subunit c (homooctomer), MT-ATP6/subunit a, MT-ATP8/subunit 8, ATP5ME/subunit e, ATP5MF/subunit f, ATP5MG/subunit g, ATP5MK/subunit k, ATP5MJ/subunit j, ATP5F1C/subunit gamma, ATP5F1D/subunit delta, ATP5F1E/subunit epsilon, ATP5PF/subunit F6, ATP5PB/subunit b, ATP5PD/subunit d, ATP5PO/subunit OSCP. ATP synthase complex consists of a soluble F(1) head domain (subunits alpha(3) and beta(3)) - the catalytic core - and a membrane F(0) domain - the membrane proton channel (subunits c, a, 8, e, f, g, k and j). These two domains are linked by a central stalk (subunits gamma, delta, and epsilon) rotating inside the F1 region and a stationary peripheral stalk (subunits F6, b, d, and OSCP).

The protein localises to the mitochondrion membrane. In terms of biological role, subunit 8, of the mitochondrial membrane ATP synthase complex (F(1)F(0) ATP synthase or Complex V) that produces ATP from ADP in the presence of a proton gradient across the membrane which is generated by electron transport complexes of the respiratory chain. ATP synthase complex consist of a soluble F(1) head domain - the catalytic core - and a membrane F(1) domain - the membrane proton channel. These two domains are linked by a central stalk rotating inside the F(1) region and a stationary peripheral stalk. During catalysis, ATP synthesis in the catalytic domain of F(1) is coupled via a rotary mechanism of the central stalk subunits to proton translocation. In vivo, can only synthesize ATP although its ATP hydrolase activity can be activated artificially in vitro. Part of the complex F(0) domain. The sequence is that of ATP synthase F(0) complex subunit 8 from Rhea americana (Greater rhea).